The sequence spans 158 residues: MLMPKQNRVAIYEYLFKEGVMVAKKDYHAPKHPDLEKIPNLQVIKAMQSLKSRGYVKEQFAWRHFYWYLTNEGIEYLRIFLHLPPEIVPATLKRSVRAETVRRGAVGRPDAPARSAEDRSAYRRAPTTPAAHDKKADVGPGSADLEFRGGFGRGRPAP.

The segment at 99-158 (ETVRRGAVGRPDAPARSAEDRSAYRRAPTTPAAHDKKADVGPGSADLEFRGGFGRGRPAP) is disordered. The segment covering 149-158 (GGFGRGRPAP) has biased composition (gly residues).

It belongs to the eukaryotic ribosomal protein eS10 family.

The protein localises to the cytoplasm. The protein is Small ribosomal subunit protein eS10 (RpS10) of Spodoptera frugiperda (Fall armyworm).